The following is a 441-amino-acid chain: Tubulin beta chain (441 aa).

8 residues coordinate GTP: Q11, E69, S138, G142, T143, G144, N204, and N226. E69 is a binding site for Mg(2+).

Belongs to the tubulin family. Dimer of alpha and beta chains. A typical microtubule is a hollow water-filled tube with an outer diameter of 25 nm and an inner diameter of 15 nM. Alpha-beta heterodimers associate head-to-tail to form protofilaments running lengthwise along the microtubule wall with the beta-tubulin subunit facing the microtubule plus end conferring a structural polarity. Microtubules usually have 13 protofilaments but different protofilament numbers can be found in some organisms and specialized cells. Requires Mg(2+) as cofactor.

The protein resides in the cytoplasm. It localises to the cytoskeleton. Its function is as follows. Tubulin is the major constituent of microtubules, a cylinder consisting of laterally associated linear protofilaments composed of alpha- and beta-tubulin heterodimers. Microtubules grow by the addition of GTP-tubulin dimers to the microtubule end, where a stabilizing cap forms. Below the cap, tubulin dimers are in GDP-bound state, owing to GTPase activity of alpha-tubulin. This Babesia bovis protein is Tubulin beta chain.